We begin with the raw amino-acid sequence, 290 residues long: UPF0761 membrane protein YihY (290 aa).

Helical transmembrane passes span 44 to 64, 104 to 124, 140 to 160, 183 to 203, 210 to 230, and 244 to 264; these read LLSL…FPMF, VGAC…DSAL, FAVY…SLAI, IFPL…VPTI, AIVG…GFAL, and VLAV…IVLL.

This sequence belongs to the UPF0761 family.

The protein resides in the cell inner membrane. This is UPF0761 membrane protein YihY from Escherichia coli O127:H6 (strain E2348/69 / EPEC).